A 945-amino-acid polypeptide reads, in one-letter code: Chaperone protein ClpD, chloroplastic (945 aa).

A chloroplast-targeting transit peptide spans 1–89; the sequence is MEVLSTSSPL…FERFTERAIR (89 aa). Repeat regions lie at residues 90 to 146 and 168 to 233; these read AIIF…WDEA and FSIS…LKGE. Residues 90–233 form the Clp R domain; the sequence is AIIFSQKEAK…AAALTRLKGE (144 aa). Positions 233–264 are disordered; sequence EIAKDGREPSSSSKGSFESPPSGRIAGSGPGG. Low complexity predominate over residues 241–255; sequence PSSSSKGSFESPPSG. The tract at residues 271–523 is i; the sequence is LEQFCVDLTA…RARIEAFRKK (253 aa). Position 316–323 (316–323) interacts with ATP; sequence GEAGVGKT. Residues 555–586 are disordered; sequence SRQKQDDGDAISDESGELVEESSLPPAAGDDE. Acidic residues predominate over residues 562 to 574; that stretch reads GDAISDESGELVE. The II stretch occupies residues 590 to 781; the sequence is VGPDDIAAVA…LIIMTSNVGS (192 aa). 664–671 is an ATP binding site; that stretch reads GPTGVGKT.

It belongs to the ClpA/ClpB family. ClpD subfamily. As to quaternary structure, homodimer and homohexamer. Hexamerization upon addition of ATP. Interacts with CLPT1. Stably associated with the import machinery. Mg(2+) serves as cofactor. Expressed in stems and leaves.

The protein localises to the plastid. Its subcellular location is the chloroplast stroma. It catalyses the reaction ATP + H2O = ADP + phosphate + H(+). Molecular chaperone that interact with a ClpP-like protease involved in degradation of denatured proteins in the chloroplast. The ATPase activity of CLPD is stimulated by CLPT1. Has no ADPase activity. Interacts with transit peptides with a positional preference. Localization of the signal sequence at the N-terminal end of a protein seems mandatory for interaction to take place. The sequence is that of Chaperone protein ClpD, chloroplastic from Arabidopsis thaliana (Mouse-ear cress).